Reading from the N-terminus, the 302-residue chain is Myeloid-associated differentiation marker-like protein 2 (302 aa).

MARVEL domains follow at residues 13-149 (AIWS…AKPG) and 154-298 (YMAT…RLRI). Transmembrane regions (helical) follow at residues 45-65 (AYGTFCVFVWAFCFALTILIV), 87-107 (AYAMLATLMTLTAAVIYPMYF), 124-144 (LAVSVCAALLFVTYAVEVFLT), 158-178 (ASGLLKVVQAFVACVIFGALA), 191-211 (WCVAVYSFCFGVTMVVVILNI), 225-245 (FVVIYTVLAILMYISAAVIWP), and 273-293 (LAVTIFTHINLILYIADLIYT).

It belongs to the MAL family.

Its subcellular location is the membrane. The chain is Myeloid-associated differentiation marker-like protein 2 (myadml2) from Xenopus laevis (African clawed frog).